A 142-amino-acid polypeptide reads, in one-letter code: Large ribosomal subunit protein uL13 (142 aa).

It belongs to the universal ribosomal protein uL13 family. Part of the 50S ribosomal subunit.

Its function is as follows. This protein is one of the early assembly proteins of the 50S ribosomal subunit, although it is not seen to bind rRNA by itself. It is important during the early stages of 50S assembly. The sequence is that of Large ribosomal subunit protein uL13 from Citrobacter koseri (strain ATCC BAA-895 / CDC 4225-83 / SGSC4696).